Reading from the N-terminus, the 88-residue chain is Auxin-responsive protein SAUR21 (88 aa).

Belongs to the ARG7 family.

The protein localises to the cell membrane. Functions as a positive effector of cell expansion through modulation of auxin transport. The chain is Auxin-responsive protein SAUR21 from Arabidopsis thaliana (Mouse-ear cress).